Here is a 580-residue protein sequence, read N- to C-terminus: N(6)-adenosine-methyltransferase catalytic subunit METTL3 (580 aa).

The segment at 1–70 (MSDTWSSIQA…PKPSTTSVAP (70 aa)) is disordered. Ser-2 bears the N-acetylserine; alternate mark. Ser-2 is subject to Phosphoserine; alternate. Residues 28–37 (QDSGHLDLRN) are compositionally biased toward basic and acidic residues. Residues Ser-43, Ser-48, and Ser-50 each carry the phosphoserine modification. The span at 55–67 (APTSSGPKPSTTS) shows a compositional bias: low complexity. Residues Lys-177, Lys-211, Lys-212, and Lys-215 each participate in a glycyl lysine isopeptide (Lys-Gly) (interchain with G-Cter in SUMO1) cross-link. The tract at residues 198-217 (LASSASEPAKEPAKKSRKHA) is disordered. Residues 210–215 (AKKSRK) carry the Nuclear localization signal motif. A phosphoserine mark is found at Ser-219, Ser-243, and Ser-350. S-adenosyl-L-methionine contacts are provided by residues 377–378 (DI) and Asp-395. Positions 396-410 (PPWDIHMELPYGTLT) are gate loop 1. Interaction with METTL14 regions lie at residues 450–454 (ERVDE) and 464–480 (QRII…NHGK). The segment at 462 to 479 (QLQRIIRTGRTGHWLNHG) is interphase loop. The interval 465 to 478 (RIIRTGRTGHWLNH) is positively charged region required for RNA-binding. Residues 507–515 (VRSTSHKPD) are gate loop 2. S-adenosyl-L-methionine is bound by residues Lys-513, 536–539 (RPHN), and 549–550 (NQ).

Belongs to the MT-A70-like family. Heterodimer; heterodimerizes with METTL14 to form an antiparallel heterodimer that constitutes an active methyltransferase. Component of the WMM complex, a N6-methyltransferase complex composed of a catalytic subcomplex, named MAC, and of an associated subcomplex, named MACOM. The MAC subcomplex is composed of METTL3 and METTL14. The MACOM subcomplex is composed of WTAP, ZC3H13, CBLL1/HAKAI, VIRMA, and, in some cases of RBM15 (RBM15 or RBM15B). Interacts with NCBP1/CBP80. Interacts with EIF4E. Interacts with EIF3B. Post-translationally, sumoylation inhibits the N6-adenosine-methyltransferase activity. Sumoylation does not affect subcellular location or interaction with METTL14. Desumoylated by SENP1. As to expression, present in both germ cells and somatic cells during testis development (at protein level).

The protein localises to the nucleus. It localises to the nucleus speckle. It is found in the cytoplasm. The enzyme catalyses an adenosine in mRNA + S-adenosyl-L-methionine = an N(6)-methyladenosine in mRNA + S-adenosyl-L-homocysteine + H(+). Methyltransferase activity is regulated by miRNAs via a sequence pairing mechanism. Methyltransferase activity is inhibited by sumoylation. Its function is as follows. The METTL3-METTL14 heterodimer forms a N6-methyltransferase complex that methylates adenosine residues at the N(6) position of some RNAs and regulates various processes such as the circadian clock, differentiation of embryonic and hematopoietic stem cells, cortical neurogenesis, response to DNA damage, differentiation of T-cells and primary miRNA processing. In the heterodimer formed with METTL14, METTL3 constitutes the catalytic core. N6-methyladenosine (m6A), which takes place at the 5'-[AG]GAC-3' consensus sites of some mRNAs, plays a role in mRNA stability, processing, translation efficiency and editing. M6A acts as a key regulator of mRNA stability: methylation is completed upon the release of mRNA into the nucleoplasm and promotes mRNA destabilization and degradation. In embryonic stem cells (ESCs), m6A methylation of mRNAs encoding key naive pluripotency-promoting transcripts results in transcript destabilization, promoting differentiation of ESCs. M6A regulates the length of the circadian clock: acts as an early pace-setter in the circadian loop by putting mRNA production on a fast-track for facilitating nuclear processing, thereby providing an early point of control in setting the dynamics of the feedback loop. M6A also regulates circadian regulation of hepatic lipid metabolism. M6A regulates spermatogonial differentiation and meiosis and is essential for male fertility and spermatogenesis. Also required for oogenesis. Involved in the response to DNA damage: in response to ultraviolet irradiation, METTL3 rapidly catalyzes the formation of m6A on poly(A) transcripts at DNA damage sites, leading to the recruitment of POLK to DNA damage sites. M6A is also required for T-cell homeostasis and differentiation: m6A methylation of transcripts of SOCS family members (SOCS1, SOCS3 and CISH) in naive T-cells promotes mRNA destabilization and degradation, promoting T-cell differentiation. Inhibits the type I interferon response by mediating m6A methylation of IFNB. M6A also regulates cortical neurogenesis: m6A methylation of transcripts related to transcription factors, neural stem cells, the cell cycle and neuronal differentiation during brain development promotes their destabilization and decay, promoting differentiation of radial glial cells. M6A also takes place in other RNA molecules, such as primary miRNA (pri-miRNAs). Mediates m6A methylation of Xist RNA, thereby participating in random X inactivation: m6A methylation of Xist leads to target YTHDC1 reader on Xist and promote transcription repression activity of Xist. METTL3 mediates methylation of pri-miRNAs, marking them for recognition and processing by DGCR8. Acts as a positive regulator of mRNA translation independently of the methyltransferase activity: promotes translation by interacting with the translation initiation machinery in the cytoplasm. The protein is N(6)-adenosine-methyltransferase catalytic subunit METTL3 of Mus musculus (Mouse).